The primary structure comprises 944 residues: MGRILIAHLFLPSSVGFSFDTVPHDEVGSKFMQKEESKDWIADTPLDESAIVSEEESDDDSLLSDLPEEIDSTNAQSNIATPSPGTVAAAISGIQPPPKTPSSDSPSLENSLSNLNDLFKSRGRHMAFSKNDGTNLSLPPSRHQSPPPSSVLASQRHHRRHDSELEEFARRASRSLSFSMNGTPQRRMTFDAEAWKNVIFKIKPSSFGNASFYNAISAATRSKQFDDHLFVGTCGIPTDSLPDSLKERISHDYITEHSSLVVYPTDTDFVGHYNHYCKNILWPTFHYQIPDNPKSKAYEDHSWANYVKVNKAFADTIVDNYEQDDMIWINDYHLLLVPEMVRERLPRAKIGFFLHIPFPSSEVFRCLATRQEILKGMLGANILGFQIPEFAYHFLQTCSRLVNIDIRKNGVVSFENRQIDVIALPISIDPGFIDRCLASPPVEHWAKVLQDRFRGKHIILSHDKLDPIRGLRSKLISFERFLQKYPEYRENTILLQVAPESLQDSEHLPHISDIVTRINSAYSNIASRHVPVILLRQKLGYAQFLALMMISDALIDNSLREGISLTSHQFIYVQRKRHRPLILSEFVGSASILNDNAIIVNPWDYSKTAEAFRTALTMSEEECQKRNKAMCNLILRHDAASWAVTFQSLIKESWKEQIDMQRIPAFTAQLIKEPYQNAQKRLILLYFEGTISTWGSQYHNVMTSLQRTINLLNMLTSDPKNTVYVFSALSCQELEQLFQRVPKLGIVAENGCFVRSPPKGDATMPVSKKEIAELWKNKVLGTDLTWMKTVSEIFEYYAERTTGAYVENKDATVILHLREAEDDEAAMWAAKECCESVNNFNVPCSATIQNDMVVCRSNKVSKRLAAEDIYSANGGDYDFIFAASNDPDDDTVFSWMKNFKQSKKEVVPFTFSVCVSEHGNSTNADAESSGVFGFLQALEKVYSA.

Residues 73–84 (TNAQSNIATPSP) show a composition bias toward polar residues. Disordered regions lie at residues 73 to 113 (TNAQ…NSLS) and 129 to 166 (SKNDGTNLSLPPSRHQSPPPSSVLASQRHHRRHDSELE). A compositionally biased stretch (low complexity) spans 101–113 (PSSDSPSLENSLS). Ser141, Ser145, Ser149, Ser150, Ser163, and Ser177 each carry phosphoserine. Residues 173–652 (SRSLSFSMNG…AVTFQSLIKE (480 aa)) form a glycosyltransferase region. A Phosphothreonine modification is found at Thr189.

This sequence in the N-terminal section; belongs to the glycosyltransferase 20 family.

The catalysed reaction is D-glucose 6-phosphate + UDP-alpha-D-glucose = alpha,alpha-trehalose 6-phosphate + UDP + H(+). The polypeptide is Putative alpha,alpha-trehalose-phosphate synthase [UDP-forming] 106 kDa subunit (Schizosaccharomyces pombe (strain 972 / ATCC 24843) (Fission yeast)).